The sequence spans 173 residues: Photosystem I assembly protein Ycf3 (173 aa).

3 TPR repeats span residues Ala-35–Pro-68, Ser-72–Leu-105, and Gly-120–Asn-153.

The protein belongs to the Ycf3 family.

The protein localises to the plastid. The protein resides in the chloroplast thylakoid membrane. In terms of biological role, essential for the assembly of the photosystem I (PSI) complex. May act as a chaperone-like factor to guide the assembly of the PSI subunits. The polypeptide is Photosystem I assembly protein Ycf3 (Pyropia yezoensis (Susabi-nori)).